A 352-amino-acid chain; its full sequence is Sortase SrtE1 (352 aa).

Basic and acidic residues-rich tracts occupy residues 1-10 (MTALRPERDS) and 34-45 (RYEESAAGEENR). The disordered stretch occupies residues 1–132 (MTALRPERDS…RQARARKPGA (132 aa)). At 1–139 (MTALRPERDS…PGAAVVASRA (139 aa)) the chain is on the cytoplasmic side. The required for protein stability stretch occupies residues 15 to 79 (DQGSSYGQPY…TGPIGGGPDG (65 aa)). A compositionally biased stretch (gly residues) spans 71-82 (GPIGGGPDGGGR). Residues 83–97 (AARRKAAKRRHGRRG) show a composition bias toward basic residues. Residues 140–160 (IGEIFITTGVLMLLFVTYQLW) form a helical membrane-spanning segment. Residues 161-352 (WTNVRAHAQA…SKGKPDALVS (192 aa)) lie on the Extracellular side of the membrane. Residues histidine 251 and cysteine 320 contribute to the active site. The Proton donor role is filled by arginine 329.

Belongs to the bacterial sortase family. Class E subfamily.

The protein resides in the cell membrane. It catalyses the reaction The enzyme catalyzes a cell wall sorting reaction in which a surface protein with a sorting signal containing a LPXTG motif is cleaved between the Thr and Gly residue. The resulting threonine carboxyl end of the protein is covalently attached to a pentaglycine cross-bridge of peptidoglycan.. Functionally, transpeptidase that anchors surface proteins to the cell wall. Recognizes both Leu-Ala-x-Thr-Gly and Leu-Pro-x-Thr-Gly, with a preference for the former. Unlike the S.aureus sortase it cleaves not only the Thr-Gly motif but also the Ala-X bond; Ala-Glu and Ala-His bonds are better substrates than the Thr-Gly motif in vitro. Among its possible substrates are the chaplins ChpA, ChpB and ChpC; this enzyme is less important for ChpC attachment than is SrtE2. A double knockout mutant of srtE1 and srtE2 shows a developmental defect in aerial hyphae formation more dramatic than that due to chaplin deletion. The polypeptide is Sortase SrtE1 (Streptomyces coelicolor (strain ATCC BAA-471 / A3(2) / M145)).